A 339-amino-acid polypeptide reads, in one-letter code: Tetraacyldisaccharide 4'-kinase (339 aa).

Residue 58–65 (TVGGSGKT) participates in ATP binding.

This sequence belongs to the LpxK family.

It catalyses the reaction a lipid A disaccharide + ATP = a lipid IVA + ADP + H(+). Its pathway is glycolipid biosynthesis; lipid IV(A) biosynthesis; lipid IV(A) from (3R)-3-hydroxytetradecanoyl-[acyl-carrier-protein] and UDP-N-acetyl-alpha-D-glucosamine: step 6/6. Transfers the gamma-phosphate of ATP to the 4'-position of a tetraacyldisaccharide 1-phosphate intermediate (termed DS-1-P) to form tetraacyldisaccharide 1,4'-bis-phosphate (lipid IVA). This Shewanella baltica (strain OS155 / ATCC BAA-1091) protein is Tetraacyldisaccharide 4'-kinase.